An 833-amino-acid polypeptide reads, in one-letter code: Toll-like receptor 4 (833 aa).

A signal peptide spans 1–23; the sequence is MMPPTRLAGTLIPAMAFLSCLRP. The LRRNT domain occupies 24–54; that stretch reads ESWDPCVEVVPNITYQCMDLNLHKIPDNIPS. Over 24–632 the chain is Extracellular; sequence ESWDPCVEVV…FRNATCQVRK (609 aa). Residues Cys-29 and Cys-40 are joined by a disulfide bond. An N-linked (GlcNAc...) asparagine glycan is attached at Asn-35. LRR repeat units lie at residues 55-76, 79-100, 103-124, 127-148, and 151-172; these read STKD…SFSN, ELQV…AYQG, HLSI…AFSG, SLQT…PIGH, and TLKE…EYFS. An N-linked (GlcNAc...) asparagine glycan is attached at Asn-173. LRR repeat units follow at residues 176-197, 205-225, and 227-236; these read NLEY…DLQV, NLSL…AFKE, and KLRELTLRSN. Asn-205 carries N-linked (GlcNAc...) asparagine glycosylation. Asn-238 is a glycosylation site (N-linked (GlcNAc...) asparagine). A disulfide bond links Cys-281 and Cys-306. An N-linked (GlcNAc...) asparagine glycan is attached at Asn-309. LRR repeat units lie at residues 352–373, 374–394, 400–420, 423–444, 448–456, 472–495, 497–518, 521–542, and 545–565; these read PLKE…VKLE, SLEF…CSER, RLKH…NFLG, QLEY…SVFL, NLRYLDISY, SLQI…FMEL, NLTI…AFNS, KLQL…PYEP, and SLQT…QELR. The cysteines at positions 390 and 391 are disulfide-linked. Asn-497 and Asn-526 each carry an N-linked (GlcNAc...) asparagine glycan. Asn-570 and Asn-575 each carry an N-linked (GlcNAc...) asparagine glycan. In terms of domain architecture, LRRCT spans 579–630; that stretch reads NDFACVCEHQSFLQWVKDQRQLLVEVEQMVCAKPLDMQGMPMLNFRNATCQV. 2 cysteine pairs are disulfide-bonded: Cys-583-Cys-609 and Cys-585-Cys-628. A glycan (N-linked (GlcNAc...) asparagine) is linked at Asn-625. The chain crosses the membrane as a helical span at residues 633 to 653; that stretch reads TIITGSVFTVLLVFLVVVLVY. The Cytoplasmic portion of the chain corresponds to 654–833; the sequence is KFYFHLMLLA…PEGMADAEGS (180 aa). The region spanning 673 to 816 is the TIR domain; sequence STYDAFVIYS…IFWRRLRKAL (144 aa).

Belongs to the Toll-like receptor family. Belongs to the lipopolysaccharide (LPS) receptor, a multi-protein complex containing at least CD14, LY96 and TLR4. Binding to bacterial LPS leads to homodimerization. Interacts with LY96 via the extracellular domain. Interacts with MYD88 and TIRAP via their respective TIR domains. Interacts with TICAM2. Interacts with NOX4. Interacts with CNPY3 and HSP90B1; this interaction is required for proper folding in the endoplasmic reticulum. Interacts with MAP3K21; this interaction leads to negative regulation of TLR4 signaling. Interacts with CD36, following CD36 stimulation by oxLDL or amyloid-beta 42, and forms a heterodimer with TLR6. The trimeric complex is internalized and triggers inflammatory response. LYN kinase activity facilitates TLR4-TLR6 heterodimerization and signal initiation. Interacts with TICAM1 in response to LPS in a WDFY1-dependent manner. Interacts with WDFY1 in response to LPS. Interacts with SMPDL3B. Interacts with CEACAM1; upon lipopolysaccharide stimulation, forms a complex including TLR4 and the phosphorylated form of SYK and CEACAM1, which in turn, recruits PTPN6 that dephosphorylates SYK, reducing the production of reactive oxygen species (ROS) and lysosome disruption, which in turn, reduces the activity of the inflammasome. Interacts with RFTN1; the interaction occurs in response to lipopolysaccharide stimulation. Interacts with SCIMP; the interaction occurs in response to lipopolysaccharide stimulation and is enhanced by phosphorylation of SCIMP by LYN. This interaction facilitates the phosphorylation of TLR4 by LYN which elicits a selective cytokine response in macrophages. Interacts with TRAF3IP3. Interacts with TREM1; this interaction enhances TLR4-mediated inflammatory response. Interacts with ZG16B/PAUF. Interacts with CD82; this interaction inhibits TLR4-mediated signaling pathway. Phosphorylated on tyrosine residues by LYN after binding lipopolysaccharide. Post-translationally, ubiquitinated by RNF128 via 'Lys-28'-linked polyubiquitin chains, leading to proteasomal degradation.

Its subcellular location is the cell membrane. It localises to the early endosome. The protein resides in the cell projection. The protein localises to the ruffle. Transmembrane receptor that functions as a pattern recognition receptor recognizing pathogen- and damage-associated molecular patterns (PAMPs and DAMPs) to induce innate immune responses via downstream signaling pathways. At the plasma membrane, cooperates with LY96 to mediate the innate immune response to bacterial lipopolysaccharide (LPS). Also involved in LPS-independent inflammatory responses triggered by free fatty acids, such as palmitate, and Ni(2+). Mechanistically, acts via MYD88, TIRAP and TRAF6, leading to NF-kappa-B activation, cytokine secretion and the inflammatory response. Alternatively, CD14-mediated TLR4 internalization via endocytosis is associated with the initiation of a MYD88-independent signaling via the TICAM1-TBK1-IRF3 axis leading to type I interferon production. In addition to the secretion of proinflammatory cytokines, initiates the activation of NLRP3 inflammasome and formation of a positive feedback loop between autophagy and NF-kappa-B signaling cascade. In complex with TLR6, promotes inflammation in monocytes/macrophages by associating with TLR6 and the receptor CD86. Upon ligand binding, such as oxLDL or amyloid-beta 42, the TLR4:TLR6 complex is internalized and triggers inflammatory response, leading to NF-kappa-B-dependent production of CXCL1, CXCL2 and CCL9 cytokines, via MYD88 signaling pathway, and CCL5 cytokine, via TICAM1 signaling pathway. In myeloid dendritic cells, vesicular stomatitis virus glycoprotein G but not LPS promotes the activation of IRF7, leading to type I IFN production in a CD14-dependent manner. The protein is Toll-like receptor 4 (TLR4) of Felis catus (Cat).